We begin with the raw amino-acid sequence, 199 residues long: Probable GTP-binding protein EngB (199 aa).

Residues 24 to 197 (EGYEVIFAGR…GARLNTFFGY (174 aa)) enclose the EngB-type G domain. GTP contacts are provided by residues 32-39 (GRSNAGKS), 59-63 (GKTQH), 77-80 (DLPG), 144-147 (TKSD), and 176-178 (FSS). 2 residues coordinate Mg(2+): serine 39 and threonine 61.

It belongs to the TRAFAC class TrmE-Era-EngA-EngB-Septin-like GTPase superfamily. EngB GTPase family. Mg(2+) serves as cofactor.

Functionally, necessary for normal cell division and for the maintenance of normal septation. The chain is Probable GTP-binding protein EngB from Ruthia magnifica subsp. Calyptogena magnifica.